The following is a 202-amino-acid chain: Protein FAR-RED ELONGATED HYPOCOTYL 1 (202 aa).

Position 39 is a phosphoserine (serine 39). A Nuclear localization sequence (NLS) motif is present at residues 40–43 (KKRK). A Nuclear export sequence (NES) motif is present at residues 54 to 57 (LLPL). Threonine 61 carries the post-translational modification Phosphothreonine.

This sequence belongs to the FHY1 protein family. Homodimer and heterodimer with FHL. Interacts with underphosphorylated PHYA, especially upon far-red (FR) light illumination. Binds to LAF1 and HFR1. Forms PHYA/FHY1/HFR1 complex in darkness but dissociates from PHYA and HFR1 in response to continuous FR light (FRc). Post-translationally, inactivated by rapid reversible PHYA-mediated phosphorylation at Ser-39 and Thr-61 in red light (R), thus inhibiting PHYA signaling in a negative feedback loop; this ensures the seedling deetiolation process in response to a R-enriched light condition. Subsequent exposure to far-red light (FR) after the R conditions leads to dephosphorylation. The phosphorylated form is cytoplasmic only and unable to bind to chromatin at direct target genes whereas the unphosphorylated form can shuttle from cytoplasm to nucleus. In terms of tissue distribution, expressed in hypocotyl cells of etiolated plants.

It is found in the nucleus. The protein resides in the cytoplasm. Functionally, key regulator of far red / red (FR/R) spectrum-specific responses essential for the adaption to changing light conditions (e.g. de-etiolation), essentially by regulating PHYA shuttling from the cytoplasm to the nucleus and by directly regulating the expression of some target genes, depending on light conditions and phosphorylation status. Binds chromatin at target genes promoters, especially in FR light conditions. Can activate transcription of different genes, some being in a phytochrome A (PHYA)-dependent and other in a PHYA-independent manners. Controls specific aspects of plant development, such as the inhibition of seed germination under FR during salt stress. Essential for light-regulated PHYA nuclear accumulation and subsequent PHYA phototropic signaling processes involved in photomorphogenesis. Mediates the association of PHYA with HFR1 and LAF1 in the nucleus in response to FR conditions. PHYA-specific signal transducer in response to continuous FR lights. Contributes to inhibition of hypocotyl elongation in continuous blue light (B). This Arabidopsis thaliana (Mouse-ear cress) protein is Protein FAR-RED ELONGATED HYPOCOTYL 1.